Consider the following 152-residue polypeptide: TRAPP-associated protein TCA17 (152 aa).

This sequence belongs to the TRAPP small subunits family. Sedlin subfamily. In terms of assembly, interacts with the TRAPP II complex; TRAPP II subunits TRS33 and TRS65 are required for this interaction.

Its subcellular location is the golgi apparatus. The protein resides in the trans-Golgi network. Functionally, required, together with the TRAPP II subunit TRS33, for TRAPP II complex assembly or stability, and for proper Golgi localization of TRAPP and the Rab GTPase YPT31. The polypeptide is TRAPP-associated protein TCA17 (TCA17) (Saccharomyces cerevisiae (strain ATCC 204508 / S288c) (Baker's yeast)).